A 233-amino-acid chain; its full sequence is Glucosamine-6-phosphate deaminase (233 aa).

D62 serves as the catalytic Proton acceptor; for enolization step. The active-site For ring-opening step is the N128. H130 functions as the Proton acceptor; for ring-opening step in the catalytic mechanism. The active-site For ring-opening step is the E135.

The protein belongs to the glucosamine/galactosamine-6-phosphate isomerase family. NagB subfamily.

It catalyses the reaction alpha-D-glucosamine 6-phosphate + H2O = beta-D-fructose 6-phosphate + NH4(+). It functions in the pathway amino-sugar metabolism; N-acetylneuraminate degradation; D-fructose 6-phosphate from N-acetylneuraminate: step 5/5. Catalyzes the reversible isomerization-deamination of glucosamine 6-phosphate (GlcN6P) to form fructose 6-phosphate (Fru6P) and ammonium ion. This Streptococcus agalactiae serotype Ia (strain ATCC 27591 / A909 / CDC SS700) protein is Glucosamine-6-phosphate deaminase.